Reading from the N-terminus, the 247-residue chain is uncharacterized protein (247 aa).

Position 4–28 (4–28 (ALVTGGSRGIGRATALLLAQEGYTV)) interacts with NADP(+). Serine 142 serves as a coordination point for substrate. The active-site Proton acceptor is tyrosine 156.

Belongs to the short-chain dehydrogenases/reductases (SDR) family.

This is an uncharacterized protein from Escherichia coli (strain K12).